The primary structure comprises 610 residues: MATENGAVELGTQSLSTDHPPTDAAGDGSPASEKEPSLPDTEKDLGPTNTKKDPGAPDPKKNPDPPSLKKTPEAPGPEKKGDSAPASASNQGPSGEGDGGGGPAEGGTGPPAVLPQPTATADASIQKLDATQAPSGNQESGEAKAGKKAAECREAGRRGSPAFLHSPSCPAIISCSEKTLAMKPLSETTELIFAGVSETPDPQDPGPAKDEGGTNTLADGKEEAEAGQAEQAKVQGDTSQRIGFQAVPSERAEVGQALCLTAKEEDCFQILDDCPPPPAPFPHRIVELRTGNVSSEFSMNSKEALGGGKFGAVCTCTERSTGLKLAAKVIKKQTPKDKEMVLLEIEVMNQLNHRNLIQLYSAIETSHEIILFMEYIEGGELFERIVDEDYQLTEVDTMVFVRQICDGILFMHKMRVLHLDLKPENILCVNTTGHLVKIIDFGLARRYNPNEKLKVNFGTPEFLSPEVVNYDQISDKTDMWSLGVITYMLLSGLSPFLGDDDTETLNNVLSANWYFDEETFEAVSDEAKDFVSNLITKDQSARMSAEQCLAHPWLNNLAEKAKRCNRRLKSQILLKKYLMKRRWKKNFIAVSAANRFKKISSSGALMALGV.

2 disordered regions span residues 1 to 168 and 196 to 240; these read MATE…HSPS and VSET…DTSQ. Ala-2 carries the N-acetylalanine modification. Composition is skewed to basic and acidic residues over residues 32–63 and 70–82; these read SEKE…KKNP and KTPE…KKGD. The segment covering 94–109 has biased composition (gly residues); that stretch reads SGEGDGGGGPAEGGTG. Residues 141–157 are compositionally biased toward basic and acidic residues; it reads GEAKAGKKAAECREAGR. Residues Ser-160, Ser-166, and Ser-168 each carry the phosphoserine modification. The Protein kinase domain maps to 299–554; sequence MNSKEALGGG…AEQCLAHPWL (256 aa). ATP contacts are provided by residues 305–313 and Lys-328; that span reads LGGGKFGAV. Asp-420 acts as the Proton acceptor in catalysis. The residue at position 459 (Thr-459) is a Phosphothreonine. Residues 588–600 form a calmodulin-binding region; the sequence is IAVSAANRFKKIS.

This sequence belongs to the protein kinase superfamily. CAMK Ser/Thr protein kinase family. In terms of assembly, may interact with centrin.

It localises to the cytoplasm. It carries out the reaction L-seryl-[myosin light chain] + ATP = O-phospho-L-seryl-[myosin light chain] + ADP + H(+). The enzyme catalyses L-threonyl-[myosin light chain] + ATP = O-phospho-L-threonyl-[myosin light chain] + ADP + H(+). Implicated in the level of global muscle contraction and cardiac function. Phosphorylates a specific serine in the N-terminus of a myosin light chain. This chain is Myosin light chain kinase 2, skeletal/cardiac muscle (Mylk2), found in Rattus norvegicus (Rat).